Reading from the N-terminus, the 401-residue chain is Nicotinate phosphoribosyltransferase (401 aa).

A Phosphohistidine; by autocatalysis modification is found at H221.

It belongs to the NAPRTase family. Post-translationally, transiently phosphorylated on a His residue during the reaction cycle. Phosphorylation strongly increases the affinity for substrates and increases the rate of nicotinate D-ribonucleotide production. Dephosphorylation regenerates the low-affinity form of the enzyme, leading to product release.

It catalyses the reaction nicotinate + 5-phospho-alpha-D-ribose 1-diphosphate + ATP + H2O = nicotinate beta-D-ribonucleotide + ADP + phosphate + diphosphate. The protein operates within cofactor biosynthesis; NAD(+) biosynthesis; nicotinate D-ribonucleotide from nicotinate: step 1/1. In terms of biological role, catalyzes the synthesis of beta-nicotinate D-ribonucleotide from nicotinate and 5-phospho-D-ribose 1-phosphate at the expense of ATP. The chain is Nicotinate phosphoribosyltransferase from Pectobacterium carotovorum subsp. carotovorum (strain PC1).